The sequence spans 81 residues: Putative membrane protein insertion efficiency factor (81 aa).

It belongs to the UPF0161 family.

The protein localises to the cell inner membrane. Its function is as follows. Could be involved in insertion of integral membrane proteins into the membrane. The chain is Putative membrane protein insertion efficiency factor from Thermosipho melanesiensis (strain DSM 12029 / CIP 104789 / BI429).